The sequence spans 387 residues: 3-ketoacyl-CoA thiolase (387 aa).

The active-site Acyl-thioester intermediate is Cys91. Active-site proton acceptor residues include His343 and Cys373.

This sequence belongs to the thiolase-like superfamily. Thiolase family. In terms of assembly, heterotetramer of two alpha chains (FadB) and two beta chains (FadA).

The protein resides in the cytoplasm. The enzyme catalyses an acyl-CoA + acetyl-CoA = a 3-oxoacyl-CoA + CoA. It functions in the pathway lipid metabolism; fatty acid beta-oxidation. Its function is as follows. Catalyzes the final step of fatty acid oxidation in which acetyl-CoA is released and the CoA ester of a fatty acid two carbons shorter is formed. The chain is 3-ketoacyl-CoA thiolase from Photobacterium profundum (strain SS9).